We begin with the raw amino-acid sequence, 771 residues long: MIIDADYITEDGKPIIRIFKKEKGEFKVEYDRTFRPYIYALLKDDSAIDEVKKITAERHGKIVRITEVEKVQKKFLGRPIEVWKLYLEHPQDVPAIREKIREHPAVVDIFEYDIPFAKRYLIDKGLTPMEGNEELTFLAVDIETLYHEGEEFGKGPIIMISYADEEGAKVITWKSIDLPYVEVVSSEREMIKRLVKVIREKDPDVIITYNGDNFDFPYLLKRAEKLGIKLPLGRDNSEPKMQRMGDSLAVEIKGRIHFDLFPVIRRTINLPTYTLEAVYEAIFGKSKEKVYAHEIAEAWETGKGLERVAKYSMEDAKVTFELGKEFFPMEAQLARLVGQPVWDVSRSSTGNLVEWFLLRKAYERNELAPNKPDEREYERRLRESYEGGYVKEPEKGLWEGIVSLDFRSLYPSIIITHNVSPDTLNRENCKEYDVAPQVGHRFCKDFPGFIPSLLGNLLEERQKIKKRMKESKDPVEKKLLDYRQRAIKILANSYYGYYGYAKARWYCKECAESVTAWGRQYIDLVRRELESRGFKVLYIDTDGLYATIPGAKHEEIKEKALKFVEYINSKLPGLLELEYEGFYARGFFVTKKKYALIDEEGKIVTRGLEIVRRDWSEIAKETQAKVLEAILKHGNVDEAVKIVKEVTEKLSKYEIPPEKLVIYEQITRPLSEYKAIGPHVAVAKRLAAKGVKVKPGMVIGYIVLRGDGPISKRAIAIEEFDPKKHKYDAEYYIENQVLPAVERILRAFGYRKEDLKYQKTKQVGLGAWLKF.

The protein belongs to the DNA polymerase type-B family.

The enzyme catalyses DNA(n) + a 2'-deoxyribonucleoside 5'-triphosphate = DNA(n+1) + diphosphate. The sequence is that of DNA polymerase 1 (polI) from Pyrococcus abyssi (strain GE5 / Orsay).